The chain runs to 209 residues: Probable GTP-binding protein EngB (209 aa).

The region spanning 22-198 is the EngB-type G domain; that stretch reads TPLEIAFVGR…NRTVGSWFDA (177 aa). Ser37 and Thr59 together coordinate Mg(2+).

This sequence belongs to the TRAFAC class TrmE-Era-EngA-EngB-Septin-like GTPase superfamily. EngB GTPase family. Mg(2+) is required as a cofactor.

Functionally, necessary for normal cell division and for the maintenance of normal septation. This Neisseria meningitidis serogroup C (strain 053442) protein is Probable GTP-binding protein EngB.